A 507-amino-acid polypeptide reads, in one-letter code: Protein phosphatase 1J (507 aa).

Disordered regions lie at residues 1 to 102 (MLNR…RLPW) and 197 to 220 (LCLP…PQSC). The segment covering 14–23 (SSGGTSSQRS) has biased composition (low complexity). T41 carries the post-translational modification Phosphothreonine. The segment covering 59-73 (TAETTVSFSRPTFLQ) has biased composition (polar residues). Phosphoserine is present on residues S65 and S75. One can recognise a PPM-type phosphatase domain in the interval 103 to 499 (STGYAEVINA…DDISVFVIPL (397 aa)). The segment covering 199-212 (LPSTPGTPGAPSPS) has biased composition (low complexity).

This sequence belongs to the PP2C family. In terms of assembly, interacts with UBE2I/UBC9. Specifically expressed in the testicular germ cells.

The enzyme catalyses O-phospho-L-seryl-[protein] + H2O = L-seryl-[protein] + phosphate. It catalyses the reaction O-phospho-L-threonyl-[protein] + H2O = L-threonyl-[protein] + phosphate. The protein is Protein phosphatase 1J (Ppm1j) of Mus musculus (Mouse).